A 258-amino-acid polypeptide reads, in one-letter code: MKNYLLQIEYFGKNYCGWQRQSHSPSVQEELEKALSKIANQNIEVTCAGRTDTGVHATSQIVNFYSNADRPLSAWQRGVNALLPQDIKILAVQQVDNNFNSRFTAINRTYNYIIYNSATSSPIFAEHCLWENRELDIDKMNQACEYLLGEQDFSSFRSSQCQSNTPFRNIQKAEFIKQGSFIVFEVVGNAFLHHMIRNLVGSLLKVGLGFESPEWIKVVLEVKDRTQAAETAKAHGLYFVGVEYPEFSFKRQIIKLFC.

Residue Asp52 is the Nucleophile of the active site. Position 110 (Tyr110) interacts with substrate.

This sequence belongs to the tRNA pseudouridine synthase TruA family. As to quaternary structure, homodimer.

It carries out the reaction uridine(38/39/40) in tRNA = pseudouridine(38/39/40) in tRNA. Functionally, formation of pseudouridine at positions 38, 39 and 40 in the anticodon stem and loop of transfer RNAs. The polypeptide is tRNA pseudouridine synthase A (Francisella tularensis subsp. mediasiatica (strain FSC147)).